A 337-amino-acid chain; its full sequence is Viral cathepsin (337 aa).

An N-terminal signal peptide occupies residues Met-1–Thr-16. Residues Ser-17–Arg-126 constitute a propeptide, activation peptide. Disulfide bonds link Cys-147–Cys-188, Cys-181–Cys-221, and Cys-276–Cys-324. The active site involves Cys-150. Residues His-283 and Asn-303 contribute to the active site.

It belongs to the peptidase C1 family. In terms of processing, synthesized as an inactive proenzyme and activated by proteolytic removal of the inhibitory propeptide.

It carries out the reaction Endopeptidase of broad specificity, hydrolyzing substrates of both cathepsin L and cathepsin B.. Functionally, cysteine protease that plays an essential role in host liquefaction to facilitate horizontal transmission of the virus. May participate in the degradation of foreign protein expressed by the baculovirus system. The chain is Viral cathepsin (VCATH) from Mamestra configurata (bertha armyworm).